A 134-amino-acid polypeptide reads, in one-letter code: MSEKIEGIIDDLLNVEENADAIAIIGKDGQIVTQTENWNVSNDLEIINELLNEKLALGEKGITSLSIQGIKYMIVENTEERKIGTNITGKGHVLICPIPIGGPGALIAYVNPRAGPRDLLFNVQEYAKKLINLI.

The interval 55–62 (LALGEKGI) is loki loop.

Belongs to the Asgard profilin family.

It localises to the cytoplasm. Its subcellular location is the cytoskeleton. With respect to regulation, inhibition of rabbit actin polymerization is reduced by phosphatidylinositol-(4,5)-P2(1,2-dipalmitoyl), a soluble form of the phospholipid phosphatidylinositol, suggesting an unknown lipid might regulate actin-profilin interaction in vivo. Binds to actin and affects the structure of the cytoskeleton. At high concentrations inhibits spontaneous rabbit actin nucleation. This strongly suggests this archaea has a profilin-regulated actin system, and actin-type genes can be identified in this organism. The chain is Loki profilin-2 from Lokiarchaeum sp. (strain GC14_75).